The following is a 294-amino-acid chain: ATP synthase gamma chain (294 aa).

Belongs to the ATPase gamma chain family. In terms of assembly, F-type ATPases have 2 components, CF(1) - the catalytic core - and CF(0) - the membrane proton channel. CF(1) has five subunits: alpha(3), beta(3), gamma(1), delta(1), epsilon(1). CF(0) has three main subunits: a, b and c.

It localises to the cell inner membrane. Produces ATP from ADP in the presence of a proton gradient across the membrane. The gamma chain is believed to be important in regulating ATPase activity and the flow of protons through the CF(0) complex. The sequence is that of ATP synthase gamma chain from Campylobacter jejuni subsp. doylei (strain ATCC BAA-1458 / RM4099 / 269.97).